Reading from the N-terminus, the 20-residue chain is Venom prothrombin activator notanarin-D (20 aa).

Residues 1–10 (SNSLFEEVRP) enclose the Gla domain. 4-carboxyglutamate is present on residues E6 and E7. One can recognise a Peptidase S1 domain in the interval 11–20 (IVNGMDCKLG).

It belongs to the peptidase S1 family. Snake venom subfamily. Heterodimer of a light chain and a heavy chain; disulfide-linked. In terms of processing, gamma-carboxyglutamate residues are formed by vitamin K dependent carboxylation. These residues are essential for the binding of calcium. In terms of tissue distribution, expressed by the venom gland.

Its subcellular location is the secreted. The enzyme catalyses Selective cleavage of Arg-|-Thr and then Arg-|-Ile bonds in prothrombin to form thrombin.. Functionally, snake prothrombin activator that attacks the hemostatic system of prey. This protein is functionally similar to blood coagulation factor Xa. This chain is Venom prothrombin activator notanarin-D, found in Notechis scutatus niger (Peninsula tiger snake).